The primary structure comprises 387 residues: Eukaryotic translation initiation factor 3 subunit M (387 aa).

The PCI domain occupies 181–340 (LSSKVMIELL…RKVHISSTMH (160 aa)).

The protein belongs to the eIF-3 subunit M family. Component of the eukaryotic translation initiation factor 3 (eIF-3) complex. The eIF-3 complex interacts with pix.

It localises to the cytoplasm. The protein resides in the golgi apparatus. Functionally, component of the eukaryotic translation initiation factor 3 (eIF-3) complex, which is involved in protein synthesis of a specialized repertoire of mRNAs and, together with other initiation factors, stimulates binding of mRNA and methionyl-tRNAi to the 40S ribosome. The eIF-3 complex specifically targets and initiates translation of a subset of mRNAs involved in cell proliferation. The protein is Eukaryotic translation initiation factor 3 subunit M of Drosophila persimilis (Fruit fly).